A 215-amino-acid polypeptide reads, in one-letter code: Orotate phosphoribosyltransferase (215 aa).

Lysine 26 lines the 5-phospho-alpha-D-ribose 1-diphosphate pocket. An orotate-binding site is contributed by 34–35 (FF). 5-phospho-alpha-D-ribose 1-diphosphate contacts are provided by residues 72-73 (YK), arginine 99, lysine 100, lysine 103, histidine 105, and 124-132 (DDVITAGTA). The orotate site is built by threonine 128 and arginine 156.

The protein belongs to the purine/pyrimidine phosphoribosyltransferase family. PyrE subfamily. Homodimer. Requires Mg(2+) as cofactor.

It carries out the reaction orotidine 5'-phosphate + diphosphate = orotate + 5-phospho-alpha-D-ribose 1-diphosphate. The protein operates within pyrimidine metabolism; UMP biosynthesis via de novo pathway; UMP from orotate: step 1/2. Catalyzes the transfer of a ribosyl phosphate group from 5-phosphoribose 1-diphosphate to orotate, leading to the formation of orotidine monophosphate (OMP). This Yersinia pseudotuberculosis serotype O:1b (strain IP 31758) protein is Orotate phosphoribosyltransferase.